Consider the following 504-residue polypeptide: uncharacterized protein (504 aa).

Disordered stretches follow at residues 1 to 59 (MSSS…KNEY) and 171 to 255 (GVNS…NQRL). Composition is skewed to basic and acidic residues over residues 36 to 50 (KPIDKEKEKEKKEIG) and 199 to 212 (RAETPKGRKTESRQ). A compositionally biased stretch (polar residues) spans 213 to 232 (SNRGNNDNGDQRMTSKATTR).

This is an uncharacterized protein from Caenorhabditis elegans.